The sequence spans 453 residues: Ras association domain-containing protein 10 (453 aa).

One can recognise a Ras-associating domain in the interval methionine 1 to alanine 107. Residues glutamine 262–arginine 295 are a coiled coil. A compositionally biased stretch (basic and acidic residues) spans arginine 299 to glutamate 310. Disordered regions lie at residues arginine 299–glycine 322 and glycine 402–valine 453. 2 stretches are compositionally biased toward polar residues: residues glycine 402–aspartate 411 and threonine 433–aspartate 444.

The protein resides in the cytoplasm. It localises to the cytosol. The protein localises to the cytoskeleton. Its subcellular location is the microtubule organizing center. It is found in the centrosome. The protein resides in the spindle pole. In terms of biological role, may play role in regulating embryonic neurogenesis. This chain is Ras association domain-containing protein 10 (rassf10), found in Xenopus laevis (African clawed frog).